The chain runs to 259 residues: MNHYPECTCQESLCETVRGFSAHHPDSVIYQTSLMSALLSGVYEGSTTIADLLTHGDFGLGTFNELDGELIAFSSEVYQLRADGSARKARADQKTPFAVMTWFRPQYRKTFDHPVSRQQLHDVIDQQIPSDNLFCALHIDGHFRHAHTRTVPRQTPPYRAMTDVLDDQPVFRFNQRKGTLVGFRTPQHMQGLNVAGYHEHFITDDRQGGGHLLDYQLDSGVLTFGEIHKLMIDLPADSAFLQADLHPDNLDAAIRAVEN.

This sequence belongs to the alpha-acetolactate decarboxylase family.

It catalyses the reaction (2S)-2-acetolactate + H(+) = (R)-acetoin + CO2. The protein operates within polyol metabolism; (R,R)-butane-2,3-diol biosynthesis; (R,R)-butane-2,3-diol from pyruvate: step 2/3. Functionally, converts acetolactate into acetoin, which can be excreted by the cells. This may be a mechanism for controlling the internal pH of cells in the stationary stage. In Raoultella terrigena (Klebsiella terrigena), this protein is Alpha-acetolactate decarboxylase (budA).